Reading from the N-terminus, the 134-residue chain is ATP synthase epsilon chain (134 aa).

The tract at residues 100-134 (NQKLQNENLSEEEKEHYEKQRSRSQALLNLASAKV) is disordered. Positions 110-120 (EEEKEHYEKQR) are enriched in basic and acidic residues.

Belongs to the ATPase epsilon chain family. As to quaternary structure, F-type ATPases have 2 components, CF(1) - the catalytic core - and CF(0) - the membrane proton channel. CF(1) has five subunits: alpha(3), beta(3), gamma(1), delta(1), epsilon(1). CF(0) has three main subunits: a, b and c.

It is found in the cell inner membrane. Produces ATP from ADP in the presence of a proton gradient across the membrane. This chain is ATP synthase epsilon chain, found in Sulfurihydrogenibium sp. (strain YO3AOP1).